The primary structure comprises 80 residues: Metallothionein-like protein type 2 (80 aa).

The protein belongs to the metallothionein superfamily. Type 15 family.

Functionally, metallothioneins have a high content of cysteine residues that bind various heavy metals. The protein is Metallothionein-like protein type 2 (MTI) of Ricinus communis (Castor bean).